Here is a 450-residue protein sequence, read N- to C-terminus: Phosphoglucosamine mutase (450 aa).

Ser-101 serves as the catalytic Phosphoserine intermediate. Residues Ser-101, Asp-240, Asp-242, and Asp-244 each coordinate Mg(2+). At Ser-101 the chain carries Phosphoserine.

The protein belongs to the phosphohexose mutase family. Requires Mg(2+) as cofactor. Activated by phosphorylation.

It carries out the reaction alpha-D-glucosamine 1-phosphate = D-glucosamine 6-phosphate. In terms of biological role, catalyzes the conversion of glucosamine-6-phosphate to glucosamine-1-phosphate. This Streptococcus gordonii (strain Challis / ATCC 35105 / BCRC 15272 / CH1 / DL1 / V288) protein is Phosphoglucosamine mutase.